The chain runs to 568 residues: Urease subunit alpha (568 aa).

Positions 130 to 568 (GGIDTHIHFI…LPMAQRYFLF (439 aa)) constitute a Urease domain. His-135, His-137, and Lys-218 together coordinate Ni(2+). Lys-218 is subject to N6-carboxylysine. His-220 provides a ligand contact to substrate. Ni(2+) is bound by residues His-247 and His-273. His-321 (proton donor) is an active-site residue. Residue Asp-361 coordinates Ni(2+).

It belongs to the metallo-dependent hydrolases superfamily. Urease alpha subunit family. In terms of assembly, heterotrimer of UreA (gamma), UreB (beta) and UreC (alpha) subunits. Three heterotrimers associate to form the active enzyme. Ni cation is required as a cofactor. Post-translationally, carboxylation allows a single lysine to coordinate two nickel ions.

The protein resides in the cytoplasm. The catalysed reaction is urea + 2 H2O + H(+) = hydrogencarbonate + 2 NH4(+). It participates in nitrogen metabolism; urea degradation; CO(2) and NH(3) from urea (urease route): step 1/1. This is Urease subunit alpha from Burkholderia vietnamiensis (strain G4 / LMG 22486) (Burkholderia cepacia (strain R1808)).